The chain runs to 116 residues: Phosphoribosyl-ATP pyrophosphatase (116 aa).

The protein belongs to the PRA-PH family.

Its subcellular location is the cytoplasm. The enzyme catalyses 1-(5-phospho-beta-D-ribosyl)-ATP + H2O = 1-(5-phospho-beta-D-ribosyl)-5'-AMP + diphosphate + H(+). The protein operates within amino-acid biosynthesis; L-histidine biosynthesis; L-histidine from 5-phospho-alpha-D-ribose 1-diphosphate: step 2/9. This chain is Phosphoribosyl-ATP pyrophosphatase, found in Nitrobacter winogradskyi (strain ATCC 25391 / DSM 10237 / CIP 104748 / NCIMB 11846 / Nb-255).